Here is a 267-residue protein sequence, read N- to C-terminus: Ribosomal RNA small subunit methyltransferase A (267 aa).

Residues Asn18, Leu20, Gly45, Glu66, Asp91, and Asn112 each coordinate S-adenosyl-L-methionine.

This sequence belongs to the class I-like SAM-binding methyltransferase superfamily. rRNA adenine N(6)-methyltransferase family. RsmA subfamily.

The protein resides in the cytoplasm. The enzyme catalyses adenosine(1518)/adenosine(1519) in 16S rRNA + 4 S-adenosyl-L-methionine = N(6)-dimethyladenosine(1518)/N(6)-dimethyladenosine(1519) in 16S rRNA + 4 S-adenosyl-L-homocysteine + 4 H(+). Specifically dimethylates two adjacent adenosines (A1518 and A1519) in the loop of a conserved hairpin near the 3'-end of 16S rRNA in the 30S particle. May play a critical role in biogenesis of 30S subunits. This chain is Ribosomal RNA small subunit methyltransferase A, found in Shewanella amazonensis (strain ATCC BAA-1098 / SB2B).